Consider the following 504-residue polypeptide: Putative pentatricopeptide repeat-containing protein At3g28640 (504 aa).

9 PPR repeats span residues 77–107 (NSFV…MVKE), 115–149 (SYLT…GVFL), 151–181 (DSHV…IPQP), 182–216 (DVVK…GLEP), 217–251 (DEFS…SWIE), 253–287 (DVFV…NVFS), 288–319 (WAAL…GIKP), 320–350 (DSVV…MEAR), and 356–390 (KHEH…PLAS). Positions 391–470 (VWGALLNGCR…TPGWSVLEVD (80 aa)) are type E motif. Residues 471–501 (GNVTKFVSGDVSHPNLLQIHTVIHLLSVDAL) are type E(+) motif.

Belongs to the PPR family. PCMP-E subfamily.

The sequence is that of Putative pentatricopeptide repeat-containing protein At3g28640 (PCMP-E79) from Arabidopsis thaliana (Mouse-ear cress).